A 121-amino-acid chain; its full sequence is MSLTNEQIIEAIGQKTVLEVVELIKAMEETFGVTAAVAAAGPAAAAAVVEEQTEFNVVLVEAGDKKVNVIKAVRELTGLGLKEAKEKVDGAPQVVAEGVSKEAAEDAKKKLEEAGAKVELK.

It belongs to the bacterial ribosomal protein bL12 family. In terms of assembly, homodimer. Part of the ribosomal stalk of the 50S ribosomal subunit. Forms a multimeric L10(L12)X complex, where L10 forms an elongated spine to which 2 to 4 L12 dimers bind in a sequential fashion. Binds GTP-bound translation factors.

Forms part of the ribosomal stalk which helps the ribosome interact with GTP-bound translation factors. Is thus essential for accurate translation. The chain is Large ribosomal subunit protein bL12 from Pseudomonas putida (strain GB-1).